The following is a 233-amino-acid chain: Lysine exporter LysE (233 aa).

The Cytoplasmic portion of the chain corresponds to 1-2; that stretch reads ME. The chain crosses the membrane as a helical span at residues 3 to 23; it reads IFITGLLLGASLLLSIGPQNV. The Periplasmic segment spans residues 24–65; it reads LVIKQGIKREGLIAVLLVCLISDVFLFIAGTLGVDLLSNAAP. Residues 66-86 traverse the membrane as a helical segment; that stretch reads IVLDIMRWGGIAYLLWFAVMA. At 87–143 the chain is on the cytoplasmic side; it reads AKDAMTNKVEAPQIIEETEPTVPDDTPLGGSAVATDTRNRVRVEVSVDKQRVWVKPM. A helical transmembrane segment spans residues 144-164; it reads LMAIVLTWLNPNAYLDAFVFI. The Periplasmic segment spans residues 165–176; it reads GGVGAQYGDTGR. The helical transmembrane segment at 177–197 threads the bilayer; it reads WIFAAGAFAASLIWFPLVGFG. Residues 198 to 212 are Cytoplasmic-facing; sequence AAALSRPLSSPKVWR. A helical transmembrane segment spans residues 213 to 233; the sequence is WINVVVAVVMTALAIKLMLMG.

The protein belongs to the LysE/ArgO transporter (TC 2.A.75) family.

It is found in the cell inner membrane. With respect to regulation, transport process is modulated by three forces: the membrane potential, the chemical potential of lysine, and the proton gradient. Strongly inhibited by CCCP and valinomycin. Catalyzes the efflux of L-lysine. Can also export L-arginine and L-citrulline. The lysEG system prevents bacteriostasis due to elevated L-lysine or L-arginine concentrations that arise during growth in the presence of peptides or in mutants possessing a deregulated biosynthesis pathway. In vitro, can also export D-lysine during biotechnological production of D-amino acids. The chain is Lysine exporter LysE from Corynebacterium glutamicum (strain ATCC 13032 / DSM 20300 / JCM 1318 / BCRC 11384 / CCUG 27702 / LMG 3730 / NBRC 12168 / NCIMB 10025 / NRRL B-2784 / 534).